Reading from the N-terminus, the 455-residue chain is Golgi pH regulator (455 aa).

Helical transmembrane passes span 5–25 and 46–66; these read ADSV…WLFF and VTFA…LGLL. Asn67 is a glycosylation site (N-linked (GlcNAc...) asparagine). 3 consecutive transmembrane segments (helical) span residues 79 to 99, 111 to 131, and 150 to 170; these read LCVI…YFVV, LFSC…GDPF, and VGVI…VNCP. An N-linked (GlcNAc...) asparagine glycan is attached at Asn180. The next 4 helical transmembrane spans lie at 290–310, 343–363, 378–398, and 425–445; these read GYFF…NIVF, ISFI…LITL, VIVL…VLLI, and WFDV…YLAH.

This sequence belongs to the Golgi pH regulator (TC 1.A.38) family. In terms of assembly, homotrimer.

It localises to the golgi apparatus membrane. It carries out the reaction iodide(out) = iodide(in). It catalyses the reaction chloride(in) = chloride(out). The enzyme catalyses bromide(in) = bromide(out). The catalysed reaction is fluoride(in) = fluoride(out). Voltage-gated channel that enables the transfer of anions such as iodide, chloride, bromide and fluoride which may function in counter-ion conductance and participates in Golgi acidification. The chain is Golgi pH regulator (gpr89-b) from Xenopus laevis (African clawed frog).